Reading from the N-terminus, the 104-residue chain is SPbeta prophage-derived stress response protein SCP1 (104 aa).

Its subcellular location is the cytoplasm. This Bacillus subtilis (strain 168) protein is SPbeta prophage-derived stress response protein SCP1 (yorD).